Reading from the N-terminus, the 280-residue chain is Pyrethroid hydrolase (280 aa).

Residues Asp202 and His230 each act as charge relay system in the active site. A disordered region spans residues 254-280 (YRQTATKAGPDRPAGADGGRADRADLP).

This sequence belongs to the AB hydrolase superfamily. Monomer.

The catalysed reaction is (-)-trans-permethrin + H2O = (3-phenoxyphenyl)methanol + (1S,3R)-3-(2,2-dichlorovinyl)-2,2-dimethylcyclopropanecarboxylate + H(+). Its function is as follows. Catalyzes the hydrolysis of pyrethroids pesticides. Catalyzes the hydrolysis of cypermethrin to equimolar amounts of cyano-3-phenoxybenzyl alcohol and 2,2-dimethyl-3-(2,2-dichlorovinyl)-cyclopropanecarboxylic acid. Hydrolyzes cis-permethrin at approximately equal rate to trans-permethrin. The sequence is that of Pyrethroid hydrolase (pytH) from Sphingobium wenxiniae (strain DSM 21828 / CGMCC 1.7748 / JZ-1).